The sequence spans 377 residues: NADH dehydrogenase [ubiquinone] 1 alpha subcomplex subunit 9, mitochondrial (377 aa).

The transit peptide at M1 to Q35 directs the protein to the mitochondrion. K175 bears the N6-succinyllysine mark. K189 and K370 each carry N6-acetyllysine.

The protein belongs to the complex I NDUFA9 subunit family. Complex I is composed of 45 different subunits. This a component of the hydrophobic protein fraction. Interacts with BLOC1S1. Interacts with SLC2A4. Interacts with CLOCK. Interacts with RAB5IF. FAD is required as a cofactor. Post-translationally, acetylated on lysine residues. BLOC1S1 is required for acetylation. Acetylated by CLOCK in a circadian manner.

Its subcellular location is the mitochondrion matrix. Functionally, accessory subunit of the mitochondrial membrane respiratory chain NADH dehydrogenase (Complex I), that is believed not to be involved in catalysis. Required for proper complex I assembly. Complex I functions in the transfer of electrons from NADH to the respiratory chain. The immediate electron acceptor for the enzyme is believed to be ubiquinone. This Homo sapiens (Human) protein is NADH dehydrogenase [ubiquinone] 1 alpha subcomplex subunit 9, mitochondrial (NDUFA9).